The sequence spans 324 residues: Adipolin (324 aa).

Positions 1-24 (MRCWVWLLVAIVLCQQLSVVRVLA) are cleaved as a signal peptide. 2 disordered regions span residues 28 to 66 (ERKK…DPGL) and 83 to 121 (GANS…MPGA). The span at 40–49 (EPFNVSLSNS) shows a compositional bias: polar residues. N-linked (GlcNAc...) asparagine glycosylation is present at N43. The segment covering 50–60 (EELHETDKLSE) has biased composition (basic and acidic residues). The segment covering 86–98 (SKKKCKGKDKKLR) has biased composition (basic residues). Pro residues predominate over residues 103–118 (PPGPPGPQGPPGPPGM). Positions 169–324 (YRRVDEGFHC…SDFMGILMGL (156 aa)) constitute a C1q domain.

The protein belongs to the adipolin/erythroferrone family. In terms of assembly, homomultimer; disulfide-linked.

It is found in the secreted. Its function is as follows. Insulin-sensitizing adipocyte-secreted protein (adipokine) that regulates glucose metabolism in liver and adipose tissue. This Xenopus tropicalis (Western clawed frog) protein is Adipolin (c1qtnf12).